The primary structure comprises 108 residues: Competence protein ComGC (108 aa).

The first 13 residues, 1–13, serve as a signal peptide directing secretion; that stretch reads MKKMMTFLKKAKV. The may be involved in polymerization of ComGC stretch occupies residues 14–39; the sequence is KAFTLVEMLVVLLIISVLFLLFVPNL. Phenylalanine 16 is modified (N-methylphenylalanine). Residues 16-36 traverse the membrane as a helical segment; that stretch reads FTLVEMLVVLLIISVLFLLFV.

Belongs to the ComGC family. The transformation pili are flexible filaments, consisting mainly of the major pilin ComGC and smaller amounts of the minor pilins, including at least ComGD, ComGF and ComGG, and perhaps ComGE. Homodimer. Forms higher-order multimers. Interacts with ComGG; the interaction is probably direct. Post-translationally, undergoes proteolytic cleavage.

The protein localises to the cell membrane. It is found in the cell surface. It localises to the fimbrium. Its subcellular location is the secreted. In terms of biological role, major component of the type IV-like pilus (T4P) that plays a role in transformation. Transformation pili are dynamically extended and retracted, perhaps thereby promoting DNA uptake and transformation. Required for transformation. Required for DNA binding. The sequence is that of Competence protein ComGC from Streptococcus pneumoniae serotype 4 (strain ATCC BAA-334 / TIGR4).